We begin with the raw amino-acid sequence, 434 residues long: Glutamate-1-semialdehyde 2,1-aminomutase 1 (434 aa).

Lys-270 is subject to N6-(pyridoxal phosphate)lysine.

The protein belongs to the class-III pyridoxal-phosphate-dependent aminotransferase family. HemL subfamily. Homodimer. Pyridoxal 5'-phosphate is required as a cofactor.

Its subcellular location is the cytoplasm. It catalyses the reaction (S)-4-amino-5-oxopentanoate = 5-aminolevulinate. The protein operates within porphyrin-containing compound metabolism; protoporphyrin-IX biosynthesis; 5-aminolevulinate from L-glutamyl-tRNA(Glu): step 2/2. This Bacillus thuringiensis subsp. konkukian (strain 97-27) protein is Glutamate-1-semialdehyde 2,1-aminomutase 1.